A 388-amino-acid polypeptide reads, in one-letter code: MKWLLLLGLVALSECIMYKVPLIRKKSLRRTLSERGLLKDFLKKHNLNPARKYFPQWKAPTLVDEQPLENYLDMEYFGTIGIGTPAQDFTVVFDTGSSNLWVPSVYCSSLACTNHNRFNPEDSSTYQSTSETVSITYGTGSMTGILGYDTVQVGGISDTNQIFGLSETEPGSFLYYAPFDGILGLAYPSISSSGATPVFDNIWNQGLVSQDLFSVYLSADDQSGSVVIFGGIDSSYYTGSLNWVPVTVEGYWQITVDSITMNGEAIACAEGCQAIVDTGTSLLTGPTSPIANIQSDIGASENSDGDMVVSCSAISSLPDIVFTINGVQYPVPPSAYILQSEGSCISGFQGMNLPTESGELWILGDVFIRQYFTVFDRANNQVGLAPVA.

Positions 1–15 are cleaved as a signal peptide; it reads MKWLLLLGLVALSEC. Residues 16-62 constitute a propeptide, activation peptide; sequence IMYKVPLIRKKSLRRTLSERGLLKDFLKKHNLNPARKYFPQWKAPTL. One can recognise a Peptidase A1 domain in the interval 76–385; it reads YFGTIGIGTP…DRANNQVGLA (310 aa). Aspartate 94 is an active-site residue. 2 disulfide bridges follow: cysteine 107-cysteine 112 and cysteine 268-cysteine 272. Aspartate 277 is a catalytic residue. Residues cysteine 311 and cysteine 344 are joined by a disulfide bond.

Belongs to the peptidase A1 family.

The protein localises to the secreted. The catalysed reaction is Preferential cleavage: hydrophobic, preferably aromatic, residues in P1 and P1' positions. Cleaves 1-Phe-|-Val-2, 4-Gln-|-His-5, 13-Glu-|-Ala-14, 14-Ala-|-Leu-15, 15-Leu-|-Tyr-16, 16-Tyr-|-Leu-17, 23-Gly-|-Phe-24, 24-Phe-|-Phe-25 and 25-Phe-|-Tyr-26 bonds in the B chain of insulin.. Shows particularly broad specificity; although bonds involving phenylalanine and leucine are preferred, many others are also cleaved to some extent. This is Pepsin A-3 (PGA3) from Homo sapiens (Human).